The sequence spans 154 residues: Myoglobin (154 aa).

Residues 2 to 148 (VLSDAEWQLV…FRKDIAAKYK (147 aa)) enclose the Globin domain. A Phosphoserine modification is found at serine 4. Residue histidine 65 coordinates nitrite. Position 65 (histidine 65) interacts with O2. Phosphothreonine is present on threonine 68. Histidine 94 lines the heme b pocket.

It belongs to the globin family. As to quaternary structure, monomeric.

It is found in the cytoplasm. The protein resides in the sarcoplasm. The enzyme catalyses Fe(III)-heme b-[protein] + nitric oxide + H2O = Fe(II)-heme b-[protein] + nitrite + 2 H(+). It catalyses the reaction H2O2 + AH2 = A + 2 H2O. In terms of biological role, monomeric heme protein which primary function is to store oxygen and facilitate its diffusion within muscle tissues. Reversibly binds oxygen through a pentacoordinated heme iron and enables its timely and efficient release as needed during periods of heightened demand. Depending on the oxidative conditions of tissues and cells, and in addition to its ability to bind oxygen, it also has a nitrite reductase activity whereby it regulates the production of bioactive nitric oxide. Under stress conditions, like hypoxia and anoxia, it also protects cells against reactive oxygen species thanks to its pseudoperoxidase activity. This Megaptera novaeangliae (Humpback whale) protein is Myoglobin (MB).